The following is a 350-amino-acid chain: DNA polymerase IV (350 aa).

The UmuC domain occupies 7 to 188 (IIHIDMDYFF…LPVKKLFGVG (182 aa)). Asp11 and Asp106 together coordinate Mg(2+). Glu107 is an active-site residue.

The protein belongs to the DNA polymerase type-Y family. In terms of assembly, monomer. Mg(2+) serves as cofactor.

The protein resides in the cytoplasm. The enzyme catalyses DNA(n) + a 2'-deoxyribonucleoside 5'-triphosphate = DNA(n+1) + diphosphate. In terms of biological role, poorly processive, error-prone DNA polymerase involved in untargeted mutagenesis. Copies undamaged DNA at stalled replication forks, which arise in vivo from mismatched or misaligned primer ends. These misaligned primers can be extended by PolIV. Exhibits no 3'-5' exonuclease (proofreading) activity. May be involved in translesional synthesis, in conjunction with the beta clamp from PolIII. This chain is DNA polymerase IV, found in Francisella philomiragia subsp. philomiragia (strain ATCC 25017 / CCUG 19701 / FSC 153 / O#319-036).